The following is a 74-amino-acid chain: Large ribosomal subunit protein bL31 (74 aa).

Zn(2+) contacts are provided by cysteine 17, cysteine 19, cysteine 38, and cysteine 41.

It belongs to the bacterial ribosomal protein bL31 family. Type A subfamily. Part of the 50S ribosomal subunit. Requires Zn(2+) as cofactor.

Its function is as follows. Binds the 23S rRNA. This Gloeobacter violaceus (strain ATCC 29082 / PCC 7421) protein is Large ribosomal subunit protein bL31.